Reading from the N-terminus, the 221-residue chain is Iron-sulfur cluster repair protein YtfE (221 aa).

Belongs to the RIC family. YtfE subfamily. Homodimer.

The protein resides in the cytoplasm. Functionally, di-iron-containing protein involved in the repair of iron-sulfur clusters damaged by oxidative and nitrosative stress conditions. This is Iron-sulfur cluster repair protein YtfE from Pectobacterium carotovorum subsp. carotovorum (strain PC1).